A 137-amino-acid chain; its full sequence is Peptide methionine sulfoxide reductase MsrB (137 aa).

Positions 7–129 (AEELKKKLSE…NSASLAFSDE (123 aa)) constitute a MsrB domain. Zn(2+)-binding residues include cysteine 46, cysteine 49, cysteine 95, and cysteine 98. The active-site Nucleophile is the cysteine 118.

Belongs to the MsrB Met sulfoxide reductase family. The cofactor is Zn(2+).

It catalyses the reaction L-methionyl-[protein] + [thioredoxin]-disulfide + H2O = L-methionyl-(R)-S-oxide-[protein] + [thioredoxin]-dithiol. The chain is Peptide methionine sulfoxide reductase MsrB from Salmonella dublin (strain CT_02021853).